Reading from the N-terminus, the 103-residue chain is Small ribosomal subunit protein bS18 (103 aa).

The segment covering 1–19 (MSEERTERPERTERPERPQ) has biased composition (basic and acidic residues). Positions 1 to 33 (MSEERTERPERTERPERPQQRGSGPRKRRPFQR) are disordered. The span at 24–33 (GPRKRRPFQR) shows a compositional bias: basic residues.

Belongs to the bacterial ribosomal protein bS18 family. As to quaternary structure, part of the 30S ribosomal subunit. Forms a tight heterodimer with protein bS6.

Binds as a heterodimer with protein bS6 to the central domain of the 16S rRNA, where it helps stabilize the platform of the 30S subunit. This Geobacter sulfurreducens (strain ATCC 51573 / DSM 12127 / PCA) protein is Small ribosomal subunit protein bS18.